The chain runs to 209 residues: Uracil phosphoribosyltransferase (209 aa).

5-phospho-alpha-D-ribose 1-diphosphate contacts are provided by residues Arg79, Arg104, and 131–139; that span reads DPMLATGGS. Uracil-binding positions include Ile194 and 199–201; that span reads GDA. Position 200 (Asp200) interacts with 5-phospho-alpha-D-ribose 1-diphosphate.

It belongs to the UPRTase family. Mg(2+) is required as a cofactor.

It catalyses the reaction UMP + diphosphate = 5-phospho-alpha-D-ribose 1-diphosphate + uracil. It functions in the pathway pyrimidine metabolism; UMP biosynthesis via salvage pathway; UMP from uracil: step 1/1. Its activity is regulated as follows. Allosterically activated by GTP. Functionally, catalyzes the conversion of uracil and 5-phospho-alpha-D-ribose 1-diphosphate (PRPP) to UMP and diphosphate. The polypeptide is Uracil phosphoribosyltransferase (Streptococcus pneumoniae serotype 4 (strain ATCC BAA-334 / TIGR4)).